Here is a 635-residue protein sequence, read N- to C-terminus: 1-deoxy-D-xylulose-5-phosphate synthase (635 aa).

Thiamine diphosphate-binding positions include H72 and 113–115; that span reads GHA. D144 lines the Mg(2+) pocket. Thiamine diphosphate is bound by residues 145-146, N174, Y287, and E370; that span reads GA. N174 provides a ligand contact to Mg(2+).

Belongs to the transketolase family. DXPS subfamily. Homodimer. Mg(2+) serves as cofactor. Requires thiamine diphosphate as cofactor.

The enzyme catalyses D-glyceraldehyde 3-phosphate + pyruvate + H(+) = 1-deoxy-D-xylulose 5-phosphate + CO2. It participates in metabolic intermediate biosynthesis; 1-deoxy-D-xylulose 5-phosphate biosynthesis; 1-deoxy-D-xylulose 5-phosphate from D-glyceraldehyde 3-phosphate and pyruvate: step 1/1. In terms of biological role, catalyzes the acyloin condensation reaction between C atoms 2 and 3 of pyruvate and glyceraldehyde 3-phosphate to yield 1-deoxy-D-xylulose-5-phosphate (DXP). The polypeptide is 1-deoxy-D-xylulose-5-phosphate synthase (Trichormus variabilis (strain ATCC 29413 / PCC 7937) (Anabaena variabilis)).